Here is an 85-residue protein sequence, read N- to C-terminus: Sugar transporter SemiSWEET (85 aa).

The 58-residue stretch at 2-59 (ENLIGYVAAFLTTVSFLPQVLRVVMTKQTRDISRNMYIMFFLGVVLWFVYGILRSDLP) folds into the PQ-loop domain. 3 consecutive transmembrane segments (helical) span residues 5–25 (IGYV…LRVV), 33–53 (ISRN…VYGI), and 57–77 (DLPI…ILYY).

In terms of assembly, homodimer.

Its subcellular location is the cell membrane. The homodimer mediates transmembrane sugar transport down a concentration gradient. Transport is probably effected by rocking-type movements, where a cargo-binding cavity opens first on one and then on the other side of the membrane. This chain is Sugar transporter SemiSWEET, found in Leptospira biflexa serovar Patoc (strain Patoc 1 / ATCC 23582 / Paris).